The chain runs to 457 residues: tRNA modification GTPase MnmE (457 aa).

(6S)-5-formyl-5,6,7,8-tetrahydrofolate is bound by residues Arg-24, Glu-81, and Lys-121. The 163-residue stretch at 218-380 folds into the TrmE-type G domain; sequence GIKIVITGKP…LLKYLTKIIS (163 aa). Asn-228 provides a ligand contact to K(+). GTP contacts are provided by residues 228–233, 247–253, 272–275, and 338–341; these read NVGKSS, TNIAGTT, DTAG, and NKAD. Ser-232 contributes to the Mg(2+) binding site. The K(+) site is built by Thr-247, Ile-249, and Thr-252. Thr-253 provides a ligand contact to Mg(2+). Position 457 (Lys-457) interacts with (6S)-5-formyl-5,6,7,8-tetrahydrofolate.

Belongs to the TRAFAC class TrmE-Era-EngA-EngB-Septin-like GTPase superfamily. TrmE GTPase family. Homodimer. Heterotetramer of two MnmE and two MnmG subunits. The cofactor is K(+).

Its subcellular location is the cytoplasm. Exhibits a very high intrinsic GTPase hydrolysis rate. Involved in the addition of a carboxymethylaminomethyl (cmnm) group at the wobble position (U34) of certain tRNAs, forming tRNA-cmnm(5)s(2)U34. This is tRNA modification GTPase MnmE from Baumannia cicadellinicola subsp. Homalodisca coagulata.